Here is a 342-residue protein sequence, read N- to C-terminus: AA9 family lytic polysaccharide monooxygenase H (342 aa).

The signal sequence occupies residues 1 to 19 (MSKASALLAGLTGAALVAA). The Cu(2+) site is built by H20 and H106. 2 cysteine pairs are disulfide-bonded: C75/C195 and C117/C121. O2 is bound by residues H181 and Q190. Position 192 (Y192) interacts with Cu(2+). The segment at 263–308 (ATVPGGGGANPTATTTAATSAAPSTTLRTTTTSAAQTTAPPSGDVQ) is disordered. Over residues 272–305 (NPTATTTAATSAAPSTTLRTTTTSAAQTTAPPSG) the composition is skewed to low complexity. The CBM1 domain maps to 306–342 (DVQTKYGQCGGNGWTGPTVCAPGSSCSVLNEWYSQCL).

Belongs to the polysaccharide monooxygenase AA9 family. The cofactor is Cu(2+).

It is found in the secreted. The enzyme catalyses [(1-&gt;4)-beta-D-glucosyl]n+m + reduced acceptor + O2 = 4-dehydro-beta-D-glucosyl-[(1-&gt;4)-beta-D-glucosyl]n-1 + [(1-&gt;4)-beta-D-glucosyl]m + acceptor + H2O.. Its activity is regulated as follows. The presence of lignin presents a significant source of antioxidants, which probably increase the activity by trapping liberated oxidized fragments. In terms of biological role, lytic polysaccharide monooxygenase (LPMO) that depolymerizes crystalline and amorphous polysaccharides via the oxidation of scissile alpha- or beta-(1-4)-glycosidic bonds, yielding C1 or C4 oxidation products. Catalysis by LPMOs requires the reduction of the active-site copper from Cu(II) to Cu(I) by a reducing agent and H(2)O(2) or O(2) as a cosubstrate. Hydrolyzes weakly barley beta-glucan, carboxymethyl cellulose, lichenan, wheat arabinoxylan and birchwood xylan. Stimulates the hydrolysis of lignocellulosic substrates (such as hydrothermal pretreated wheat straw or steam-pretreated spruce), when combined with other cellulolytic enzymes. This is AA9 family lytic polysaccharide monooxygenase H from Thermothelomyces thermophilus (strain ATCC 42464 / BCRC 31852 / DSM 1799) (Sporotrichum thermophile).